The sequence spans 322 residues: Nuclease 1, mitochondrial (322 aa).

Histidine 142 functions as the Proton acceptor in the catalytic mechanism. Asparagine 174 provides a ligand contact to Mg(2+).

Belongs to the DNA/RNA non-specific endonuclease family. In terms of assembly, homodimer. Mn(2+) is required as a cofactor. Requires Mg(2+) as cofactor.

Its subcellular location is the mitochondrion inner membrane. This enzyme has both RNase and DNase activity. It degrades single-stranded DNA and RNA. The polypeptide is Nuclease 1, mitochondrial (pnu1) (Schizosaccharomyces pombe (strain 972 / ATCC 24843) (Fission yeast)).